We begin with the raw amino-acid sequence, 516 residues long: Cytochrome P450 1A2 (516 aa).

Serine 69 carries O-linked (GlcNAc) serine glycosylation. Phenylalanine 226 contacts substrate. Cysteine 458 lines the heme pocket.

It belongs to the cytochrome P450 family. As to quaternary structure, interacts with PGRMC1; the interaction requires PGRMC1 homodimerization. Heme serves as cofactor. In terms of tissue distribution, liver.

It localises to the endoplasmic reticulum membrane. Its subcellular location is the microsome membrane. The enzyme catalyses an organic molecule + reduced [NADPH--hemoprotein reductase] + O2 = an alcohol + oxidized [NADPH--hemoprotein reductase] + H2O + H(+). It carries out the reaction 17beta-estradiol + reduced [NADPH--hemoprotein reductase] + O2 = 2-hydroxy-17beta-estradiol + oxidized [NADPH--hemoprotein reductase] + H2O + H(+). It catalyses the reaction 17beta-estradiol + reduced [NADPH--hemoprotein reductase] + O2 = 4-hydroxy-17beta-estradiol + oxidized [NADPH--hemoprotein reductase] + H2O + H(+). The catalysed reaction is estrone + reduced [NADPH--hemoprotein reductase] + O2 = 2-hydroxyestrone + oxidized [NADPH--hemoprotein reductase] + H2O + H(+). The enzyme catalyses estrone + reduced [NADPH--hemoprotein reductase] + O2 = 4-hydroxyestrone + oxidized [NADPH--hemoprotein reductase] + H2O + H(+). It carries out the reaction cholesterol + reduced [NADPH--hemoprotein reductase] + O2 = 25-hydroxycholesterol + oxidized [NADPH--hemoprotein reductase] + H2O + H(+). It catalyses the reaction all-trans-retinol + reduced [NADPH--hemoprotein reductase] + O2 = all-trans-retinal + oxidized [NADPH--hemoprotein reductase] + 2 H2O + H(+). The catalysed reaction is all-trans-retinal + reduced [NADPH--hemoprotein reductase] + O2 = all-trans-retinoate + oxidized [NADPH--hemoprotein reductase] + H2O + 2 H(+). The enzyme catalyses (5Z,8Z,11Z,14Z)-eicosatetraenoate + reduced [NADPH--hemoprotein reductase] + O2 = (14R,15S)-epoxy-(5Z,8Z,11Z)-eicosatrienoate + oxidized [NADPH--hemoprotein reductase] + H2O + H(+). It carries out the reaction (5Z,8Z,11Z,14Z)-eicosatetraenoate + reduced [NADPH--hemoprotein reductase] + O2 = (14S,15R)-epoxy-(5Z,8Z,11Z)-eicosatrienoate + oxidized [NADPH--hemoprotein reductase] + H2O + H(+). It catalyses the reaction (5Z,8Z,11Z,14Z,17Z)-eicosapentaenoate + reduced [NADPH--hemoprotein reductase] + O2 = (17R,18S)-epoxy-(5Z,8Z,11Z,14Z)-eicosatetraenoate + oxidized [NADPH--hemoprotein reductase] + H2O + H(+). The catalysed reaction is (4Z,7Z,10Z,13Z,16Z,19Z)-docosahexaenoate + reduced [NADPH--hemoprotein reductase] + O2 = (19R,20S)-epoxy-(4Z,7Z,10Z,13Z,16Z)-docosapentaenoate + oxidized [NADPH--hemoprotein reductase] + H2O + H(+). The enzyme catalyses (5S)-hydroperoxy-(6E,8Z,11Z,14Z)-eicosatetraenoate = 5-oxo-(6E,8Z,11Z,14Z)-eicosatetraenoate + H2O. It carries out the reaction (12S)-hydroperoxy-(5Z,8Z,10E,14Z)-eicosatetraenoate = 12-oxo-(5Z,8Z,10E,14Z)-eicosatetraenoate + H2O. It catalyses the reaction (15S)-hydroperoxy-(5Z,8Z,11Z,13E)-eicosatetraenoate = 15-oxo-(5Z,8Z,11Z,13E)-eicosatetraenoate + H2O. The catalysed reaction is (13S)-hydroperoxy-(9Z,11E)-octadecadienoate = 13-oxo-(9Z,11E)-octadecadienoate + H2O. The enzyme catalyses (5Z,8Z,11Z,14Z)-eicosatetraenoate + reduced [NADPH--hemoprotein reductase] + O2 = 13-hydroxy-(5Z,8Z,11Z,14Z)-eicosatetraenoate + oxidized [NADPH--hemoprotein reductase] + H2O + H(+). It carries out the reaction (5Z,8Z,11Z,14Z)-eicosatetraenoate + reduced [NADPH--hemoprotein reductase] + O2 = 19-hydroxy-(5Z,8Z,11Z,14Z)-eicosatetraenoate + oxidized [NADPH--hemoprotein reductase] + H2O + H(+). It catalyses the reaction (9Z,12Z)-octadecadienoate + reduced [NADPH--hemoprotein reductase] + O2 = 11-hydroxy-(9Z,12Z)-octadecadienoate + oxidized [NADPH--hemoprotein reductase] + H2O + H(+). It functions in the pathway cofactor metabolism; retinol metabolism. Its pathway is steroid metabolism; cholesterol metabolism. The protein operates within lipid metabolism; arachidonate metabolism. In terms of biological role, a cytochrome P450 monooxygenase involved in the metabolism of various endogenous substrates, including fatty acids, steroid hormones and vitamins. Mechanistically, uses molecular oxygen inserting one oxygen atom into a substrate, and reducing the second into a water molecule, with two electrons provided by NADPH via cytochrome P450 reductase (NADPH--hemoprotein reductase). Catalyzes the hydroxylation of carbon-hydrogen bonds. Exhibits high catalytic activity for the formation of hydroxyestrogens from estrone (E1) and 17beta-estradiol (E2), namely 2-hydroxy E1 and E2. Metabolizes cholesterol toward 25-hydroxycholesterol, a physiological regulator of cellular cholesterol homeostasis. May act as a major enzyme for all-trans retinoic acid biosynthesis in the liver. Catalyzes two successive oxidative transformation of all-trans retinol to all-trans retinal and then to the active form all-trans retinoic acid. Primarily catalyzes stereoselective epoxidation of the last double bond of polyunsaturated fatty acids (PUFA), displaying a strong preference for the (R,S) stereoisomer. Catalyzes bisallylic hydroxylation and omega-1 hydroxylation of PUFA. May also participate in eicosanoids metabolism by converting hydroperoxide species into oxo metabolites (lipoxygenase-like reaction, NADPH-independent). Plays a role in the oxidative metabolism of xenobiotics. Catalyzes the N-hydroxylation of heterocyclic amines and the O-deethylation of phenacetin. Metabolizes caffeine via N3-demethylation. The protein is Cytochrome P450 1A2 of Homo sapiens (Human).